The sequence spans 134 residues: MTLNLCVLTPNRIIWDSEVKEIILSTNSGQIGVLPNHAPIATAVDIGILRVRLNDQWLTMALMGGFARIGNNEITILVNDAEKGSDIDPQEAQRTLEIAEANLSRAEGKRQAIEANLALRRARTRVEAINVISY.

Belongs to the ATPase epsilon chain family. F-type ATPases have 2 components, CF(1) - the catalytic core - and CF(0) - the membrane proton channel. CF(1) has five subunits: alpha(3), beta(3), gamma(1), delta(1), epsilon(1). CF(0) has three main subunits: a, b and c.

It localises to the plastid. It is found in the chloroplast thylakoid membrane. In terms of biological role, produces ATP from ADP in the presence of a proton gradient across the membrane. The chain is ATP synthase epsilon chain, chloroplastic from Liriodendron tulipifera (Tuliptree).